The primary structure comprises 226 residues: ATP-dependent dethiobiotin synthetase BioD (226 aa).

12 to 17 (GIGKTV) contributes to the ATP binding site. A Mg(2+)-binding site is contributed by Thr16. Lys37 is an active-site residue. Thr41 contacts substrate. ATP-binding positions include Asp49, 108–111 (EGAG), and 197–199 (PAG). Mg(2+) contacts are provided by Asp49 and Glu108.

It belongs to the dethiobiotin synthetase family. As to quaternary structure, homodimer. It depends on Mg(2+) as a cofactor.

The protein resides in the cytoplasm. The enzyme catalyses (7R,8S)-7,8-diammoniononanoate + CO2 + ATP = (4R,5S)-dethiobiotin + ADP + phosphate + 3 H(+). Its pathway is cofactor biosynthesis; biotin biosynthesis; biotin from 7,8-diaminononanoate: step 1/2. In terms of biological role, catalyzes a mechanistically unusual reaction, the ATP-dependent insertion of CO2 between the N7 and N8 nitrogen atoms of 7,8-diaminopelargonic acid (DAPA, also called 7,8-diammoniononanoate) to form a ureido ring. In Mycolicibacterium vanbaalenii (strain DSM 7251 / JCM 13017 / BCRC 16820 / KCTC 9966 / NRRL B-24157 / PYR-1) (Mycobacterium vanbaalenii), this protein is ATP-dependent dethiobiotin synthetase BioD.